The primary structure comprises 170 residues: Putative pre-16S rRNA nuclease (170 aa).

The segment at 1–29 (MVAASHRSPDRPGDPEGLEPGTGRGRRLG) is disordered.

This sequence belongs to the YqgF nuclease family.

The protein resides in the cytoplasm. Functionally, could be a nuclease involved in processing of the 5'-end of pre-16S rRNA. In Mycobacterium ulcerans (strain Agy99), this protein is Putative pre-16S rRNA nuclease.